The primary structure comprises 89 residues: Small ribosomal subunit protein uS15 (89 aa).

Belongs to the universal ribosomal protein uS15 family. Part of the 30S ribosomal subunit. Forms a bridge to the 50S subunit in the 70S ribosome, contacting the 23S rRNA.

In terms of biological role, one of the primary rRNA binding proteins, it binds directly to 16S rRNA where it helps nucleate assembly of the platform of the 30S subunit by binding and bridging several RNA helices of the 16S rRNA. Functionally, forms an intersubunit bridge (bridge B4) with the 23S rRNA of the 50S subunit in the ribosome. This Streptococcus gordonii (strain Challis / ATCC 35105 / BCRC 15272 / CH1 / DL1 / V288) protein is Small ribosomal subunit protein uS15.